The chain runs to 115 residues: MKKKHRIKKNDEFQTVFQKGKSTANRQFVVYQLDKEEQPNFRIGLSVSKKIGNAVVRNRIKRMIRQSITELKDEIDSGKDFVIIARKPCAEMTYEEVKKSLIHVFKRSGMKRIKK.

This sequence belongs to the RnpA family. Consists of a catalytic RNA component (M1 or rnpB) and a protein subunit.

The catalysed reaction is Endonucleolytic cleavage of RNA, removing 5'-extranucleotides from tRNA precursor.. RNaseP catalyzes the removal of the 5'-leader sequence from pre-tRNA to produce the mature 5'-terminus. It can also cleave other RNA substrates such as 4.5S RNA. The protein component plays an auxiliary but essential role in vivo by binding to the 5'-leader sequence and broadening the substrate specificity of the ribozyme. The chain is Ribonuclease P protein component from Bacillus cereus (strain Q1).